A 427-amino-acid polypeptide reads, in one-letter code: Kallistatin (427 aa).

The first 20 residues, 1–20, serve as a signal peptide directing secretion; that stretch reads MHLIDYLLLLLVGLLALSHG. N33, N108, and N157 each carry an N-linked (GlcNAc...) asparagine glycan. A glycan (N-linked (GlcNAc...) (complex) asparagine) is linked at N238.

This sequence belongs to the serpin family. As to quaternary structure, monomer and some homodimers. The N-terminus is blocked. In terms of tissue distribution, expressed by the liver and secreted in plasma.

The protein localises to the secreted. In terms of biological role, inhibits human amidolytic and kininogenase activities of tissue kallikrein. Inhibition is achieved by formation of an equimolar, heat- and SDS-stable complex between the inhibitor and the enzyme, and generation of a small C-terminal fragment of the inhibitor due to cleavage at the reactive site by tissue kallikrein. In Homo sapiens (Human), this protein is Kallistatin (SERPINA4).